A 387-amino-acid chain; its full sequence is Acyl-CoA dehydrogenase FadE29 (387 aa).

Residues Ile-123–Thr-126, Thr-132, and Thr-158 contribute to the FAD site. Glu-241 functions as the Proton acceptor in the catalytic mechanism. Val-367–Glu-369 contributes to the FAD binding site.

Belongs to the acyl-CoA dehydrogenase family. Heterotetramer composed of FadE28 and FadE29. Requires FAD as cofactor.

It carries out the reaction 3-oxochol-4-en-22-oyl-CoA + A = 3-oxochola-4,17-dien-22-oyl-CoA + AH2. Its pathway is steroid metabolism; cholesterol degradation. Its function is as follows. Involved in the third cycle of side chain dehydrogenation in the beta-oxidation of cholesterol catabolism. Contributes partly to the virulence by increasing the efficiency of beta-oxidation. Catalyzes the dehydrogenation of 2'-propanoyl-CoA ester side chains of 3-oxo-4-pregnene-20-carboxyl-CoA (3-OPC-CoA) to yield 3-oxo-4,17-pregnadiene-20-carboxyl-CoA (3-OPDC-CoA). Also able to dehydrogenate steroyl-CoA such as 3-oxo-chol-4-en-24-oyl-CoA (3-OCO-CoA), 1beta-(2'-propanoyl-CoA)-3a-alpha-H- 7a-beta-methylhexahydro-4-indanone (indanone-CoA ester), hexahydroindanone and pregenenone. The protein is Acyl-CoA dehydrogenase FadE29 (fadE29) of Mycobacterium tuberculosis (strain ATCC 25618 / H37Rv).